Here is a 459-residue protein sequence, read N- to C-terminus: Fe(3+)-Zn(2+) purple acid phosphatase (459 aa).

The first 22 residues, 1–22 (MGVVKGLLALALVLNVVVVSNG), serve as a signal peptide directing secretion. Glycine 23 carries the blocked amino end (Gly) modification. A glycan (N-linked (GlcNAc...) asparagine; partial) is linked at asparagine 108. N-linked (GlcNAc...) asparagine glycosylation occurs at asparagine 136. A Fe cation-binding site is contributed by aspartate 162. Asparagine 170 carries N-linked (GlcNAc...) asparagine glycosylation. Aspartate 191 and tyrosine 194 together coordinate Fe cation. Aspartate 191 provides a ligand contact to Zn(2+). Asparagine 228 is a Zn(2+) binding site. The N-linked (GlcNAc...) asparagine glycan is linked to asparagine 238. Histidine 313 contacts Zn(2+). The Proton donor role is filled by histidine 323. Histidine 350 provides a ligand contact to Zn(2+). A Fe cation-binding site is contributed by histidine 352. N-linked (GlcNAc...) asparagine glycosylation occurs at asparagine 423.

Belongs to the metallophosphoesterase superfamily. Purple acid phosphatase family. As to quaternary structure, homodimer; disulfide-linked. Requires Fe cation as cofactor. Zn(2+) is required as a cofactor.

The protein resides in the secreted. The enzyme catalyses a phosphate monoester + H2O = an alcohol + phosphate. With respect to regulation, inhibited by compounds CC24201, CC27209, and MO07123. Inhibited by the tetraoxoanions molybdate and phosphate. Not inhibited by EDTA or tartrate. The chain is Fe(3+)-Zn(2+) purple acid phosphatase from Phaseolus vulgaris (Kidney bean).